A 425-amino-acid chain; its full sequence is Enolase (425 aa).

Residue Q163 coordinates (2R)-2-phosphoglycerate. E205 (proton donor) is an active-site residue. Mg(2+) contacts are provided by D242, E285, and D312. (2R)-2-phosphoglycerate contacts are provided by K337, R366, S367, and K388. The Proton acceptor role is filled by K337.

The protein belongs to the enolase family. Mg(2+) is required as a cofactor.

The protein resides in the cytoplasm. It localises to the secreted. The protein localises to the cell surface. The catalysed reaction is (2R)-2-phosphoglycerate = phosphoenolpyruvate + H2O. The protein operates within carbohydrate degradation; glycolysis; pyruvate from D-glyceraldehyde 3-phosphate: step 4/5. In terms of biological role, catalyzes the reversible conversion of 2-phosphoglycerate (2-PG) into phosphoenolpyruvate (PEP). It is essential for the degradation of carbohydrates via glycolysis. This is Enolase from Ruegeria sp. (strain TM1040) (Silicibacter sp.).